Here is a 208-residue protein sequence, read N- to C-terminus: Vacuolar ATPase assembly protein VMA12 (208 aa).

Alanine 2 is modified (N-acetylalanine). A run of 2 helical transmembrane segments spans residues 146–166 and 179–199; these read LVITIFNFIVTVVAAFVCTYL and VLAALIVASVVGLAELYVMVR.

In terms of assembly, accessory component of the multisubunit proton-transporting vacuolar (V)-ATPase protein pump.

The protein localises to the cytoplasmic vesicle. It localises to the COPI-coated vesicle membrane. It is found in the endoplasmic reticulum-Golgi intermediate compartment membrane. The protein resides in the endoplasmic reticulum membrane. Functionally, accessory component of the proton-transporting vacuolar (V)-ATPase protein pump involved in intracellular iron homeostasis. In aerobic conditions, required for intracellular iron homeostasis, thus triggering the activity of Fe(2+) prolyl hydroxylase (PHD) enzymes, and leading to HIF1A hydroxylation and subsequent proteasomal degradation. Necessary for endolysosomal acidification and lysosomal degradation. May be involved in Golgi homeostasis. Binds 20(S)-hydroxycholesterol (20(S)-OHC). The sequence is that of Vacuolar ATPase assembly protein VMA12 from Homo sapiens (Human).